We begin with the raw amino-acid sequence, 362 residues long: Cobalt-precorrin-5B C(1)-methyltransferase (362 aa).

It belongs to the CbiD family.

The catalysed reaction is Co-precorrin-5B + S-adenosyl-L-methionine = Co-precorrin-6A + S-adenosyl-L-homocysteine. It participates in cofactor biosynthesis; adenosylcobalamin biosynthesis; cob(II)yrinate a,c-diamide from sirohydrochlorin (anaerobic route): step 6/10. In terms of biological role, catalyzes the methylation of C-1 in cobalt-precorrin-5B to form cobalt-precorrin-6A. The sequence is that of Cobalt-precorrin-5B C(1)-methyltransferase from Geobacter sulfurreducens (strain ATCC 51573 / DSM 12127 / PCA).